The sequence spans 347 residues: NADH-quinone oxidoreductase subunit H (347 aa).

9 helical membrane passes run 13–33, 50–70, 82–102, 115–135, 161–181, 198–218, 263–283, 286–306, and 321–341; these read IIMI…IAYV, PNVV…KFVF, AVFL…WAVV, VGIL…IMGG, IGFV…TDIV, FLDW…ISAL, CALT…IWIL, VPGI…FAMV, and LGWK…AFVL.

It belongs to the complex I subunit 1 family. In terms of assembly, NDH-1 is composed of 14 different subunits. Subunits NuoA, H, J, K, L, M, N constitute the membrane sector of the complex.

The protein localises to the cell inner membrane. The enzyme catalyses a quinone + NADH + 5 H(+)(in) = a quinol + NAD(+) + 4 H(+)(out). Functionally, NDH-1 shuttles electrons from NADH, via FMN and iron-sulfur (Fe-S) centers, to quinones in the respiratory chain. The immediate electron acceptor for the enzyme in this species is believed to be ubiquinone. Couples the redox reaction to proton translocation (for every two electrons transferred, four hydrogen ions are translocated across the cytoplasmic membrane), and thus conserves the redox energy in a proton gradient. This subunit may bind ubiquinone. This Rhizobium johnstonii (strain DSM 114642 / LMG 32736 / 3841) (Rhizobium leguminosarum bv. viciae) protein is NADH-quinone oxidoreductase subunit H.